A 110-amino-acid chain; its full sequence is Phosphoribosyl-ATP pyrophosphatase (110 aa).

This sequence belongs to the PRA-PH family.

It localises to the cytoplasm. The catalysed reaction is 1-(5-phospho-beta-D-ribosyl)-ATP + H2O = 1-(5-phospho-beta-D-ribosyl)-5'-AMP + diphosphate + H(+). It functions in the pathway amino-acid biosynthesis; L-histidine biosynthesis; L-histidine from 5-phospho-alpha-D-ribose 1-diphosphate: step 2/9. The polypeptide is Phosphoribosyl-ATP pyrophosphatase (hisE) (Azotobacter chroococcum mcd 1).